Consider the following 2357-residue polypeptide: Myosin-I heavy chain (2357 aa).

The 676-residue stretch at 13–688 folds into the Myosin motor domain; sequence QPVEDMITLP…QYLKLEELRK (676 aa). 106–113 is a binding site for ATP; that stretch reads GESGAGKT. The interval 579–586 is actin-binding; the sequence is YVRCIKPN. In terms of domain architecture, IQ spans 691-720; the sequence is LLKKVTLIQSVWRMYRCKKRYQQIRASAKI. A coiled-coil region spans residues 787–891; it reads KRDRNARMLE…QDKNINELDD (105 aa). The tract at residues 787–1076 is binding to talin A; the sequence is KRDRNARMLE…PILGAPPPPP (290 aa). Disordered stretches follow at residues 797-852 and 974-1112; these read IQRE…EEEL and ASSF…NPQP. Composition is skewed to low complexity over residues 1003–1025 and 1078–1106; these read NNNYINSNNGDLPLPTSQSSDFS and TSDSTSPSATATGNNTPNSSSASASQSTN. Positions 1155 to 1313 constitute a MyTH4 1 domain; sequence YQKSHIKSSL…PSVTELESIK (159 aa). The region spanning 1318 to 1620 is the FERM 1 domain; sequence IFVRITATDG…EYSLYLRNNA (303 aa). One can recognise an SH3 domain in the interval 1618 to 1678; that stretch reads NNAKYARALK…PVDHVEILLS (61 aa). A disordered region spans residues 1686-1849; that stretch reads VHPVATLSPP…PSKRLTVSPA (164 aa). The span at 1706 to 1733 shows a compositional bias: pro residues; the sequence is TPPPPPSISDSMSPPPQVGMLPPPPPPS. Low complexity-rich tracts occupy residues 1734–1746 and 1755–1770; these read VMGSTKPIEIPSL and SSNSSVPNSPIGSPMM. Over residues 1817 to 1828 the composition is skewed to polar residues; sequence FRSSLRVSMLNT. A MyTH4 2 domain is found at 1894–2051; that stretch reads FNKDPIKESL…PSATEIQSFR (158 aa). The FERM 2 domain maps to 2060 to 2357; sequence STCKIRFIDQ…ASVYQFYSSQ (298 aa).

The protein belongs to the TRAFAC class myosin-kinesin ATPase superfamily. Myosin family. As to quaternary structure, monomer. Interacts with talA.

It is found in the cytoplasm. In terms of biological role, myosins are actin-based motor molecules with ATPase activity. Involved in the early steps of phagocytosis and adhesion. The chain is Myosin-I heavy chain (myoI) from Dictyostelium discoideum (Social amoeba).